The chain runs to 652 residues: UvrABC system protein C (652 aa).

In terms of domain architecture, GIY-YIG spans 20-99 (PEPGCYLMRD…IKNHQPHFNV (80 aa)). The region spanning 209–244 (DELQRLLDEQMNRYAERLDFESAARVRDQLQGLDQL) is the UVR domain.

Belongs to the UvrC family. Interacts with UvrB in an incision complex.

It localises to the cytoplasm. Functionally, the UvrABC repair system catalyzes the recognition and processing of DNA lesions. UvrC both incises the 5' and 3' sides of the lesion. The N-terminal half is responsible for the 3' incision and the C-terminal half is responsible for the 5' incision. This chain is UvrABC system protein C, found in Parasynechococcus marenigrum (strain WH8102).